Consider the following 248-residue polypeptide: Ureidoacrylate amidohydrolase RutB (248 aa).

The Proton acceptor role is filled by Asp43. Lys152 is an active-site residue. Cys185 serves as the catalytic Nucleophile.

It belongs to the isochorismatase family. RutB subfamily.

The catalysed reaction is (Z)-3-ureidoacrylate + H2O + H(+) = (Z)-3-aminoacrylate + NH4(+) + CO2. The enzyme catalyses (Z)-3-ureidoacrylate + H2O = (Z)-3-aminoacrylate + carbamate + H(+). It carries out the reaction (Z)-2-methylureidoacrylate + H2O + H(+) = (Z)-2-methylaminoacrylate + NH4(+) + CO2. In terms of biological role, hydrolyzes ureidoacrylate to form aminoacrylate and carbamate. The carbamate hydrolyzes spontaneously, thereby releasing one of the nitrogen atoms of the pyrimidine ring as ammonia and one of its carbon atoms as CO2. The sequence is that of Ureidoacrylate amidohydrolase RutB from Serratia proteamaculans (strain 568).